The primary structure comprises 2803 residues: Microtubule-associated protein 1A (2803 aa).

Residues serine 114, serine 117, serine 118, serine 121, and serine 155 each carry the phosphoserine modification. A Phosphotyrosine modification is found at tyrosine 177. Disordered regions lie at residues glycine 302–proline 466 and isoleucine 486–threonine 516. 3 positions are modified to phosphoserine: serine 319, serine 322, and serine 384. Basic and acidic residues predominate over residues alanine 335–alanine 390. Residues glutamate 391 to lysine 406 show a composition bias toward basic residues. Composition is skewed to basic and acidic residues over residues glutamate 407–leucine 464 and isoleucine 486–serine 499. Repeat copies occupy residues lysine 415 to aspartate 417, lysine 420 to glutamate 422, arginine 427 to glutamate 429, lysine 431 to aspartate 433, arginine 436 to glutamate 438, lysine 440 to aspartate 442, lysine 444 to glutamate 446, and arginine 449 to aspartate 451. Residues lysine 415–glutamate 541 are 9 X 3 AA repeats of K-K-[DE]. Position 504 is a phosphothreonine (threonine 504). Phosphoserine is present on residues serine 526 and serine 527. Repeat 9 spans residues lysine 539–glutamate 541. Composition is skewed to basic and acidic residues over residues lysine 539 to leucine 554 and glutamine 585 to valine 596. Disordered stretches follow at residues lysine 539–glutamate 712, tyrosine 734–glutamate 806, glutamate 847–aspartate 1080, threonine 1109–aspartate 1548, and glutamate 1573–lysine 1605. Phosphoserine occurs at positions 605 and 612. Residue threonine 616 is modified to Phosphothreonine. Over residues tryptophan 623–serine 667 the composition is skewed to basic and acidic residues. 3 positions are modified to phosphoserine: serine 644, serine 667, and serine 787. Composition is skewed to polar residues over residues glutamate 847–glutamate 860 and threonine 871–threonine 883. Phosphoserine is present on residues serine 874, serine 877, serine 878, and serine 891. Threonine 894 carries the post-translational modification Phosphothreonine. Residues serine 896, serine 900, serine 909, serine 986, serine 996, serine 1004, serine 1013, serine 1019, and serine 1029 each carry the phosphoserine modification. Residues glycine 1031–proline 1065 are compositionally biased toward basic and acidic residues. Phosphoserine occurs at positions 1069, 1144, 1146, 1160, 1172, 1190, 1200, 1203, 1209, 1218, 1221, and 1264. A compositionally biased stretch (basic and acidic residues) spans lysine 1131–serine 1146. Positions serine 1154–threonine 1169 are enriched in polar residues. Composition is skewed to polar residues over residues aspartate 1211–threonine 1224 and serine 1264–aspartate 1278. Positions proline 1289–serine 1299 are enriched in low complexity. 5 positions are modified to phosphoserine: serine 1326, serine 1329, serine 1544, serine 1600, and serine 1626. Basic and acidic residues-rich tracts occupy residues isoleucine 1338–aspartate 1548 and glutamine 1586–lysine 1605. The span at arginine 1632–arginine 1642 shows a compositional bias: basic and acidic residues. Disordered stretches follow at residues arginine 1632–arginine 1684, aspartate 1713–glycine 1879, and glutamate 1892–glycine 2673. Residue serine 1654 is modified to Phosphoserine. Residues proline 1655–glutamate 1666 are compositionally biased toward basic and acidic residues. Serine 1675, serine 1749, serine 1762, serine 1776, serine 1791, serine 1797, serine 1801, serine 1812, and serine 1818 each carry phosphoserine. Pro residues predominate over residues leucine 1852 to alanine 1867. A compositionally biased stretch (basic and acidic residues) spans lysine 1907–serine 1929. Serine 1931 carries the post-translational modification Phosphoserine. Residues proline 1951 to serine 1964 show a composition bias toward basic and acidic residues. Phosphothreonine is present on threonine 1957. Polar residues predominate over residues serine 2019–phenylalanine 2033. Position 2022 is a phosphoserine (serine 2022). The segment covering threonine 2042 to alanine 2066 has biased composition (pro residues). At threonine 2058 the chain carries Phosphothreonine. Phosphoserine occurs at positions 2074, 2104, 2106, and 2108. Residues proline 2086 to alanine 2122 are compositionally biased toward basic and acidic residues. The segment covering proline 2175–alanine 2184 has biased composition (pro residues). Serine 2235, serine 2252, serine 2256, serine 2259, and serine 2260 each carry phosphoserine. Positions glutamate 2257–isoleucine 2268 are enriched in polar residues. Low complexity predominate over residues alanine 2312–proline 2325. Position 2449 is a phosphoserine (serine 2449). A compositionally biased stretch (basic and acidic residues) spans isoleucine 2461 to leucine 2473. Over residues serine 2502–aspartate 2514 the composition is skewed to low complexity. Over residues aspartate 2559–proline 2575 the composition is skewed to pro residues. A compositionally biased stretch (basic and acidic residues) spans glycine 2590–glutamine 2602. Phosphoserine occurs at positions 2649 and 2664.

The protein belongs to the MAP1 family. As to quaternary structure, 3 different light chains, LC1 (a cleavage product of MAP1B), LC2 (a cleavage product of MAP1A) and LC3 (produced by one of the MAP1LC3 genes), can associate with the MAP1A or MAP1B heavy chains. Interacts with TIAM2. Interacts with guanylate kinase-like domain of DLG1, DLG2 and DLG4. Binds to CSNK1D. Interacts with ELAVL4. Post-translationally, phosphorylated by CSNK1D. In terms of processing, LC2 is generated from MAP1A by proteolytic processing. In terms of tissue distribution, brain.

The protein localises to the cytoplasm. Its subcellular location is the cytoskeleton. Structural protein involved in the filamentous cross-bridging between microtubules and other skeletal elements. This Homo sapiens (Human) protein is Microtubule-associated protein 1A (MAP1A).